The following is a 770-amino-acid chain: Arf-GAP with coiled-coil, ANK repeat and PH domain-containing protein 2 (770 aa).

Residues 1 to 226 enclose the BAR domain; that stretch reads MKMTVDFEEC…MKDLGAQLDR (226 aa). Positions 266 to 361 constitute a PH domain; it reads GIVMEGYLFK…WIKAVQTSIA (96 aa). The disordered stretch occupies residues 371–391; it reads SEKLDKKSSPSTGSLDSGNES. The segment covering 379–388 has biased composition (polar residues); sequence SPSTGSLDSG. Phosphoserine occurs at positions 384 and 387. One can recognise an Arf-GAP domain in the interval 399–520; it reads ESALQRVQCI…KFVDKYSALL (122 aa). The segment at 414–437 adopts a C4-type zinc-finger fold; the sequence is CCDCGLADPRWASINLGITLCIEC. Position 521 is a phosphoserine (S521). The segment at 542-572 is disordered; sequence ARASVHTPVKSNDSGIQQCSEDGRESLPSTV. A compositionally biased stretch (polar residues) spans 550–561; the sequence is VKSNDSGIQQCS. A phosphoserine mark is found at S573 and S576. ANK repeat units lie at residues 632-661, 665-694, and 698-727; these read NQAT…NVNQ, QGRG…NQHA, and EGKD…NEEM. The residue at position 734 (Y734) is a Phosphotyrosine. Phosphoserine is present on S767.

Interacts with RAB35 (GTP-bound form); the interaction is direct and probably recruits ACAP2 to membranes. Interacts with MICALL1; the interaction is indirect through RAB35.

The protein localises to the endosome membrane. It localises to the cell membrane. GAP activity stimulated by phosphatidylinositol 4,5-bisphosphate (PIP2) and phosphatidic acid. Functionally, GTPase-activating protein (GAP) for ADP ribosylation factor 6 (ARF6). Doesn't show GAP activity for RAB35. The protein is Arf-GAP with coiled-coil, ANK repeat and PH domain-containing protein 2 (Acap2) of Mus musculus (Mouse).